An 89-amino-acid polypeptide reads, in one-letter code: Small ribosomal subunit protein uS15 (89 aa).

Over residues 1–21 (MALSPEKKNEIIENFKTHEGD) the composition is skewed to basic and acidic residues. Residues 1–23 (MALSPEKKNEIIENFKTHEGDTG) are disordered.

It belongs to the universal ribosomal protein uS15 family. Part of the 30S ribosomal subunit. Forms a bridge to the 50S subunit in the 70S ribosome, contacting the 23S rRNA.

In terms of biological role, one of the primary rRNA binding proteins, it binds directly to 16S rRNA where it helps nucleate assembly of the platform of the 30S subunit by binding and bridging several RNA helices of the 16S rRNA. Functionally, forms an intersubunit bridge (bridge B4) with the 23S rRNA of the 50S subunit in the ribosome. The protein is Small ribosomal subunit protein uS15 of Desulforamulus reducens (strain ATCC BAA-1160 / DSM 100696 / MI-1) (Desulfotomaculum reducens).